Consider the following 105-residue polypeptide: MSCIFFSELFPIFTFFKEKIGHYARVLARKLDRDLSLSIRNLLTLKRKNMNFLKFLNRSSPVDTRAIEMDYLSLSFFFFGGSSWSLTRITASTSSCTDSSPLGRP.

It is found in the mitochondrion. This is an uncharacterized protein from Paramecium tetraurelia.